An 833-amino-acid polypeptide reads, in one-letter code: ERAD-associated E3 ubiquitin-protein ligase component HRD3 (833 aa).

The first 19 residues, 1 to 19 (MLLSTYLNWASVLLTIAGA), serve as a signal peptide directing secretion. Asn-105, Asn-127, and Asn-146 each carry an N-linked (GlcNAc...) asparagine glycan. A Sel1-like 1 repeat occupies 107–143 (TEAMYKLSQINLWGQYGYPHNKSVAFQYLQKFNDMTS). Sel1-like repeat units lie at residues 147-184 (SSALFDLAVAYSTGLFGTLPVDVARGLLYFQRSARLGD) and 185-220 (LKAKQVLAYRYFSGYSVARDVDKALLLYKEIAEEIK). Residues Asn-424 and Asn-607 are each glycosylated (N-linked (GlcNAc...) asparagine). Sel1-like repeat units follow at residues 592-623 (TDAAVVAGDIYFQMKNYTKALSLYQSAALKFS) and 624-659 (AQALWNIGYMYEHGLGVEKDFHLAKRFYDQILEHNQ). N-linked (GlcNAc...) asparagine glycosylation is found at Asn-688 and Asn-713. A helical transmembrane segment spans residues 752–772 (LLTMVCVLIIFAISMFFRTVA). The disordered stretch occupies residues 789–818 (GNALGEEGNPENENEEDDENDDEGRARARN). Over residues 796-810 (GNPENENEEDDENDD) the composition is skewed to acidic residues.

Belongs to the sel-1 family. As to quaternary structure, interacts with HRD1.

It localises to the endoplasmic reticulum membrane. Its function is as follows. Component of the endoplasmic reticulum quality control (ERQC) system involved in ubiquitin-dependent degradation of missfolded endoplasmic reticulum proteins. Component of the HRD1 ubiquitin ligase complex, which is part of the ERAD-L and ERAD-M pathways responsible for the rapid degradation of soluble lumenal and membrane proteins with misfolded lumenal domains (ERAD-L), or ER-membrane proteins with misfolded transmembrane domains (ERAD-M). ERAD-L substrates are ubiquitinated through HRD1 in conjunction with the E2 ubiquitin-conjugating enzymes UBC1 and UBC7-CUE1. Ubiquitinated substrates are then removed to the cytosol via the action of the UFD1-NPL4-CDC48/p97 (UNC) AAA ATPase complex and targeted to the proteasome. ERAD-M substrates are processed by the same HRD1-HRD3 core complex, but only a subset of the other components is required for ERAD-M. Stabilizes the HRD1 ubiquitin-protein ligase. Also has a function in recruiting misfolded protein substrates. The polypeptide is ERAD-associated E3 ubiquitin-protein ligase component HRD3 (HRD3) (Candida glabrata (strain ATCC 2001 / BCRC 20586 / JCM 3761 / NBRC 0622 / NRRL Y-65 / CBS 138) (Yeast)).